Consider the following 124-residue polypeptide: Fluoride-specific ion channel FluC (124 aa).

4 consecutive transmembrane segments (helical) span residues 4 to 24 (ILFVALGGSIGAVFRYLISIF), 35 to 55 (FGTLLVNIIGSFLMGVIYALG), 70 to 90 (VGLLGALTTFSTFSNETLLLI), and 95 to 115 (WLKAFLNIALNLCLCIFMVYL). Na(+)-binding residues include G74 and T77.

Belongs to the fluoride channel Fluc/FEX (TC 1.A.43) family.

The protein resides in the cell inner membrane. It carries out the reaction fluoride(in) = fluoride(out). Na(+) is not transported, but it plays an essential structural role and its presence is essential for fluoride channel function. Fluoride-specific ion channel. Important for reducing fluoride concentration in the cell, thus reducing its toxicity. This chain is Fluoride-specific ion channel FluC, found in Shewanella woodyi (strain ATCC 51908 / MS32).